Here is a 426-residue protein sequence, read N- to C-terminus: Tryptophan synthase beta chain (426 aa).

Lys108 is subject to N6-(pyridoxal phosphate)lysine.

It belongs to the TrpB family. In terms of assembly, tetramer of two alpha and two beta chains. It depends on pyridoxal 5'-phosphate as a cofactor.

The enzyme catalyses (1S,2R)-1-C-(indol-3-yl)glycerol 3-phosphate + L-serine = D-glyceraldehyde 3-phosphate + L-tryptophan + H2O. Its pathway is amino-acid biosynthesis; L-tryptophan biosynthesis; L-tryptophan from chorismate: step 5/5. Functionally, the beta subunit is responsible for the synthesis of L-tryptophan from indole and L-serine. This is Tryptophan synthase beta chain (trpB) from Thermoplasma volcanium (strain ATCC 51530 / DSM 4299 / JCM 9571 / NBRC 15438 / GSS1).